The primary structure comprises 119 residues: Probable non-functional T cell receptor gamma variable 10 (119 aa).

A signal peptide spans 1–19; the sequence is MSLLEAFAFSSWALGLGLS. Positions 24–119 constitute an Ig-like domain; that stretch reads FQLSISTEVK…MAVYYCAAWD (96 aa). An intrachain disulfide couples Cys40 to Cys115.

In terms of assembly, gamma-delta TR is a heterodimer composed of a gamma and delta chain; disulfide-linked. The gamma-delta TR is associated with the transmembrane signaling CD3 coreceptor proteins following the stoichiometry: a single gamma-delta TR heterodimer associates with one CD3D-CD3E heterodimer, one CD3G-CD3E heterodimer and one CD247 homodimer forming a stable octameric structure. Upon activation, gamma-delta TR complex associates with FCER1G to initiate intracellular signaling.

It is found in the cell membrane. In terms of biological role, probable non-functional open reading frame (ORF) of V region of the variable domain of T cell receptor (TR) gamma chain. Non-functional ORF generally cannot participate in the synthesis of a productive T cell receptor (TR) chain due to altered V-(D)-J or switch recombination and/or splicing site (at mRNA level) and/or conserved amino acid change (protein level). Gamma-delta TRs recognize a variety of self and foreign non-peptide antigens frequently expressed at the epithelial boundaries between the host and external environment, including endogenous lipids presented by MH-like protein CD1D and phosphoantigens presented by butyrophilin-like molecule BTN3A1. Upon antigen recognition induces rapid, innate-like immune responses involved in pathogen clearance and tissue repair. Binding of gamma-delta TR complex to antigen triggers phosphorylation of immunoreceptor tyrosine-based activation motifs (ITAMs) in the CD3 chains by the LCK and FYN kinases, allowing the recruitment, phosphorylation, and activation of ZAP70 that facilitates phosphorylation of the scaffolding proteins LCP2 and LAT. This lead to the formation of a supramolecular signalosome that recruits the phospholipase PLCG1, resulting in calcium mobilization and ERK activation, ultimately leading to T cell expansion and differentiation into effector cells. Gamma-delta TRs are produced through somatic rearrangement of a limited repertoire of variable (V), diversity (D), and joining (J) genes. The potential diversity of gamma-delta TRs is conferred by the unique ability to rearrange (D) genes in tandem and to utilize all three reading frames. The combinatorial diversity is considerably increased by the sequence exonuclease trimming and random nucleotide (N) region additions which occur during the V-(D)-J rearrangements. The chain is Probable non-functional T cell receptor gamma variable 10 from Homo sapiens (Human).